Here is a 561-residue protein sequence, read N- to C-terminus: Dihydroxy-acid dehydratase 3 (561 aa).

Position 50 (Cys50) interacts with [2Fe-2S] cluster. Mg(2+) is bound at residue Asp82. A [2Fe-2S] cluster-binding site is contributed by Cys123. Asp124 and Lys125 together coordinate Mg(2+). Lys125 bears the N6-carboxylysine mark. Cys195 provides a ligand contact to [2Fe-2S] cluster. Glu447 lines the Mg(2+) pocket. Catalysis depends on Ser473, which acts as the Proton acceptor.

The protein belongs to the IlvD/Edd family. As to quaternary structure, homodimer. [2Fe-2S] cluster is required as a cofactor. Requires Mg(2+) as cofactor.

It catalyses the reaction (2R)-2,3-dihydroxy-3-methylbutanoate = 3-methyl-2-oxobutanoate + H2O. The enzyme catalyses (2R,3R)-2,3-dihydroxy-3-methylpentanoate = (S)-3-methyl-2-oxopentanoate + H2O. Its pathway is amino-acid biosynthesis; L-isoleucine biosynthesis; L-isoleucine from 2-oxobutanoate: step 3/4. The protein operates within amino-acid biosynthesis; L-valine biosynthesis; L-valine from pyruvate: step 3/4. Functions in the biosynthesis of branched-chain amino acids. Catalyzes the dehydration of (2R,3R)-2,3-dihydroxy-3-methylpentanoate (2,3-dihydroxy-3-methylvalerate) into 2-oxo-3-methylpentanoate (2-oxo-3-methylvalerate) and of (2R)-2,3-dihydroxy-3-methylbutanoate (2,3-dihydroxyisovalerate) into 2-oxo-3-methylbutanoate (2-oxoisovalerate), the penultimate precursor to L-isoleucine and L-valine, respectively. This chain is Dihydroxy-acid dehydratase 3, found in Bordetella bronchiseptica (strain ATCC BAA-588 / NCTC 13252 / RB50) (Alcaligenes bronchisepticus).